Consider the following 509-residue polypeptide: Maturase K (509 aa).

It belongs to the intron maturase 2 family. MatK subfamily.

It localises to the plastid. It is found in the chloroplast. In terms of biological role, usually encoded in the trnK tRNA gene intron. Probably assists in splicing its own and other chloroplast group II introns. The sequence is that of Maturase K from Citrus sinensis (Sweet orange).